Consider the following 2595-residue polypeptide: Glucosylceramide transporter ABCA12 (2595 aa).

Residues 23–43 (PLWTLVLILWPVIIFIILAIT) traverse the membrane as a helical segment. Residues 109 to 119 (LKKPSNPKRDS) are compositionally biased toward basic and acidic residues. Positions 109–143 (LKKPSNPKRDSNLSLRSTQVPERSHTSLATVPPRP) are disordered. Asn120, Asn156, Asn174, Asn214, Asn275, Asn331, Asn365, Asn381, Asn410, Asn433, Asn455, Asn526, Asn541, Asn574, Asn605, Asn645, Asn749, Asn773, Asn812, Asn823, Asn854, Asn917, and Asn960 each carry an N-linked (GlcNAc...) asparagine glycan. The span at 120–137 (NLSLRSTQVPERSHTSLA) shows a compositional bias: polar residues. Helical transmembrane passes span 1062-1082 (VSYSLPIVLMVAWVVFIAAFV), 1109-1129 (FAWLIESIGFLLVTIAILIVI), and 1142-1162 (FILFLYFSDYSFSVIAMSYLI). Asn1167 carries an N-linked (GlcNAc...) asparagine glycan. 3 helical membrane-spanning segments follow: residues 1171–1191 (IAALIGSLIYVIAFFPFIVLV), 1197–1217 (LSYVIKVFMSLLSPTAFSYAS), and 1247–1267 (FGWLCCLILADSFIYFFIAWY). N-linked (GlcNAc...) asparagine glycosylation occurs at Asn1319. The ABC transporter 1 domain maps to 1346-1577 (VALHGVTKIY…FGDGYHLTLT (232 aa)). 1378-1385 (GPNGAGKT) contributes to the ATP binding site. N-linked (GlcNAc...) asparagine glycosylation is found at Asn1524, Asn1663, Asn1673, Asn1686, Asn1690, and Asn1704. Positions 1672-1703 (SNMSLEHLTQRKVGNPSANGTSTPDDLSVSSS) are disordered. Polar residues predominate over residues 1687–1703 (PSANGTSTPDDLSVSSS). Residues 1747 to 1767 (LIAQVILPIVFVATAMGLGTL) traverse the membrane as a helical segment. N-linked (GlcNAc...) asparagine glycosylation is found at Asn1819, Asn1835, Asn1876, Asn1921, and Asn1952. A run of 7 helical transmembrane segments spans residues 1979–1999 (ATISSLIDILVALSILMGYSV), 2035–2055 (FIYDMVFYLVPVAFSIGVIAI), 2072–2092 (LLLLLFGYATFSWMYLLAGLF), 2103–2123 (VCVNLFFGINSIVSLSVVYFL), 2143–2163 (IFLIFPQFCFGYGLIELSQQQ), 2187–2207 (GAMFVALVSQGTMFFLLRLLI), and 2270–2290 (IIAVNNISLGIPAGECFGLLG). An ABC transporter 2 domain is found at 2254-2489 (VQLHRLTKTY…FGRGFTVKVH (236 aa)). ATP is bound at residue 2290–2297 (GVNGAGKT). N-linked (GlcNAc...) asparagine glycans are attached at residues Asn2318, Asn2542, and Asn2547. Polar residues predominate over residues 2575–2587 (VDTSSQGSTISVD). Residues 2575-2595 (VDTSSQGSTISVDSQEDQLDS) form a disordered region.

Belongs to the ABC transporter superfamily. ABCA family. As to quaternary structure, interacts with NR1H2 and ABCA1; this interaction is required for ABCA1 localization to the cell surface and is necessary for its normal activity and stability. In terms of tissue distribution, expressed in a number of other tissues besides skin, including heart, intestine, stomach, and kidney. Expressed mainly in the granular layer of the skin. Expressed in lung. Expressed in alpha and beta cells of pancreatic islets.

The protein resides in the cytoplasmic vesicle. The protein localises to the secretory vesicle membrane. Its subcellular location is the golgi apparatus membrane. The enzyme catalyses ATP + H2O + phospholipidSide 1 = ADP + phosphate + phospholipidSide 2.. It catalyses the reaction a beta-D-glucosylceramide(in) + ATP + H2O = a beta-D-glucosylceramide(out) + ADP + phosphate + H(+). In terms of biological role, transports lipids such as glucosylceramides from the outer to the inner leaflet of lamellar granules (LGs) membrane, whereby the lipids are finally transported to the keratinocyte periphery via the trans-Golgi network and LGs and released to the apical surface of the granular keratinocytes to form lipid lamellae in the stratum corneum of the epidermis, which is essential for skin barrier function. In the meantime, participates in the transport of the lamellar granules-associated proteolytic enzymes, in turn regulates desquamation and keratinocyte differentiation. Furthermore, is essential for the regulation of cellular cholesterol homeostasis by regulating ABCA1-dependent cholesterol efflux from macrophages through interaction with NR1H2 and ABCA1. Plays pleiotropic roles in regulating glucose stimulated insulin secretion from beta cells, regulating the morphology and fusion of insulin granules, lipid raft abundance and the actin cytoskeleton. Also involved in lung surfactant biogenesis. In Mus musculus (Mouse), this protein is Glucosylceramide transporter ABCA12.